Consider the following 244-residue polypeptide: Phosphoribosyl isomerase A (244 aa).

Asp10 serves as the catalytic Proton acceptor. Asp129 functions as the Proton donor in the catalytic mechanism.

This sequence belongs to the HisA/HisF family.

It is found in the cytoplasm. The enzyme catalyses 1-(5-phospho-beta-D-ribosyl)-5-[(5-phospho-beta-D-ribosylamino)methylideneamino]imidazole-4-carboxamide = 5-[(5-phospho-1-deoxy-D-ribulos-1-ylimino)methylamino]-1-(5-phospho-beta-D-ribosyl)imidazole-4-carboxamide. The catalysed reaction is N-(5-phospho-beta-D-ribosyl)anthranilate = 1-(2-carboxyphenylamino)-1-deoxy-D-ribulose 5-phosphate. It functions in the pathway amino-acid biosynthesis; L-histidine biosynthesis; L-histidine from 5-phospho-alpha-D-ribose 1-diphosphate: step 4/9. It participates in amino-acid biosynthesis; L-tryptophan biosynthesis; L-tryptophan from chorismate: step 3/5. In terms of biological role, involved in both the histidine and tryptophan biosynthetic pathways. This Mycobacterium ulcerans (strain Agy99) protein is Phosphoribosyl isomerase A.